A 290-amino-acid polypeptide reads, in one-letter code: 33 kDa chaperonin (290 aa).

2 cysteine pairs are disulfide-bonded: Cys235/Cys237 and Cys268/Cys271.

This sequence belongs to the HSP33 family. In terms of processing, under oxidizing conditions two disulfide bonds are formed involving the reactive cysteines. Under reducing conditions zinc is bound to the reactive cysteines and the protein is inactive.

The protein localises to the cytoplasm. Functionally, redox regulated molecular chaperone. Protects both thermally unfolding and oxidatively damaged proteins from irreversible aggregation. Plays an important role in the bacterial defense system toward oxidative stress. This chain is 33 kDa chaperonin, found in Streptococcus equi subsp. zooepidemicus (strain H70).